The chain runs to 71 residues: Prophage lysis protein S homolog EssQ (71 aa).

Belongs to the lambda phage S protein family.

This chain is Prophage lysis protein S homolog EssQ (essQ), found in Escherichia coli (strain K12).